A 444-amino-acid polypeptide reads, in one-letter code: Pre-mRNA-splicing factor cwc25 (444 aa).

Disordered regions lie at residues 1–27 (MGSG…QKAE), 168–385 (LASM…TDLD), and 397–425 (EAER…GFMS). Residues 19 to 65 (NVAATQKAEAEAIAERKKLQQRLQEIEEERRKEEIQKALEAAGGKRK) adopt a coiled-coil conformation. Residues 186-199 (QRRHKHRSHHHRSD) are compositionally biased toward basic residues. Basic and acidic residues-rich tracts occupy residues 200–220 (RHRD…DRDR) and 228–281 (DSRD…DDRS). Positions 282 to 293 (RRHRFPQGRSRS) are enriched in basic residues. 3 stretches are compositionally biased toward basic and acidic residues: residues 305-344 (RREY…EQPK), 360-372 (DGDH…ERAK), and 397-410 (EAER…EKAR). Residues 364–417 (KNAEEERAKKLAAMQAAATDLDKAREERLKALAEAERAEREADEKARQQNKKFR) are a coiled coil.

This sequence belongs to the CWC25 family. In terms of assembly, associated with the spliceosome.

The protein localises to the nucleus. Functionally, involved in pre-mRNA splicing. The chain is Pre-mRNA-splicing factor cwc25 (msp-6) from Neurospora crassa (strain ATCC 24698 / 74-OR23-1A / CBS 708.71 / DSM 1257 / FGSC 987).